Reading from the N-terminus, the 704-residue chain is Methionine--tRNA ligase (704 aa).

The short motif at 17-27 is the 'HIGH' region element; the sequence is PYANGPIHLGH. Zn(2+) is bound by residues Cys148, Cys151, Cys161, and Cys164. Residues 348–352 carry the 'KMSKS' region motif; that stretch reads KMSKS. Lys351 is a binding site for ATP. The tRNA-binding domain occupies 603–704; the sequence is ELSKVELRVG…KDAKPGDRLK (102 aa).

Belongs to the class-I aminoacyl-tRNA synthetase family. MetG type 1 subfamily. Homodimer. Zn(2+) is required as a cofactor.

Its subcellular location is the cytoplasm. The catalysed reaction is tRNA(Met) + L-methionine + ATP = L-methionyl-tRNA(Met) + AMP + diphosphate. In terms of biological role, is required not only for elongation of protein synthesis but also for the initiation of all mRNA translation through initiator tRNA(fMet) aminoacylation. The protein is Methionine--tRNA ligase of Leptospira borgpetersenii serovar Hardjo-bovis (strain L550).